A 416-amino-acid chain; its full sequence is MLSSYNTLETVDPDLWQAIKGEMQRQEEYIELIASENYASPAVMQAQGSVLTNKYAEGYPGKRYYGGCEYVDVVEQLAIDRVRALFDAEYVNVQPHSGSQANAAVYLTALKPGDTLLGMSLAHGGHLTHGASVNLSGKIFNAVSYGLRSDTEELDYDEVARLAHEHKPKLIVAGASAYSLVIDWKRFRKIADDIGAYLFVDMAHYAGLVAAGYYPNPVGIADFVTSTTHKTLRGPRGGIIMARAEHEKALNSAIFPQTQGGPLMHVIAAKAVAFKEAASQEFKDYQEQVIDNARVMAKVLQERGLRIVSGRTDCHMFLVDLRPKYITGKQAAESLEVAHITVNKNAIPNDPQKPFVTSGIRIGSPAITTRGFAEFESEQLAHLIADVLEAPTDSSVLTEVARQAKALCAKFPVYQG.

Residues L121 and 125–127 (GHL) contribute to the (6S)-5,6,7,8-tetrahydrofolate site. An N6-(pyridoxal phosphate)lysine modification is found at K230.

It belongs to the SHMT family. In terms of assembly, homodimer. The cofactor is pyridoxal 5'-phosphate.

The protein resides in the cytoplasm. It carries out the reaction (6R)-5,10-methylene-5,6,7,8-tetrahydrofolate + glycine + H2O = (6S)-5,6,7,8-tetrahydrofolate + L-serine. The protein operates within one-carbon metabolism; tetrahydrofolate interconversion. It functions in the pathway amino-acid biosynthesis; glycine biosynthesis; glycine from L-serine: step 1/1. Catalyzes the reversible interconversion of serine and glycine with tetrahydrofolate (THF) serving as the one-carbon carrier. This reaction serves as the major source of one-carbon groups required for the biosynthesis of purines, thymidylate, methionine, and other important biomolecules. Also exhibits THF-independent aldolase activity toward beta-hydroxyamino acids, producing glycine and aldehydes, via a retro-aldol mechanism. The sequence is that of Serine hydroxymethyltransferase from Nitrosospira multiformis (strain ATCC 25196 / NCIMB 11849 / C 71).